Reading from the N-terminus, the 422-residue chain is 2,3-bisphosphoglycerate-independent phosphoglycerate mutase (422 aa).

Positions Asp-173–Ala-194 are disordered. Over residues Ala-174–Ser-190 the composition is skewed to basic and acidic residues.

It belongs to the BPG-independent phosphoglycerate mutase family. A-PGAM subfamily.

The catalysed reaction is (2R)-2-phosphoglycerate = (2R)-3-phosphoglycerate. It functions in the pathway carbohydrate degradation; glycolysis; pyruvate from D-glyceraldehyde 3-phosphate: step 3/5. Functionally, catalyzes the interconversion of 2-phosphoglycerate and 3-phosphoglycerate. In Methanopyrus kandleri (strain AV19 / DSM 6324 / JCM 9639 / NBRC 100938), this protein is 2,3-bisphosphoglycerate-independent phosphoglycerate mutase.